Consider the following 152-residue polypeptide: Transcriptional regulator MraZ (152 aa).

SpoVT-AbrB domains lie at 5 to 52 (ANAI…PLPE) and 81 to 124 (ATEG…DHSV).

It belongs to the MraZ family. Forms oligomers.

Its subcellular location is the cytoplasm. It is found in the nucleoid. In Pseudoalteromonas atlantica (strain T6c / ATCC BAA-1087), this protein is Transcriptional regulator MraZ.